The chain runs to 197 residues: dTTP/UTP pyrophosphatase (197 aa).

Aspartate 70 serves as the catalytic Proton acceptor.

It belongs to the Maf family. YhdE subfamily. As to quaternary structure, homodimer. Can also form homotetramers. Requires a divalent metal cation as cofactor.

It localises to the cytoplasm. It carries out the reaction dTTP + H2O = dTMP + diphosphate + H(+). The catalysed reaction is UTP + H2O = UMP + diphosphate + H(+). The enzyme catalyses 5-methyl-UTP + H2O = 5-methyl-UMP + diphosphate + H(+). It catalyses the reaction psi-UTP + H2O = psi-UMP + diphosphate + H(+). It carries out the reaction 5-methyl-CTP + H2O = 5-methyl-CMP + diphosphate + H(+). In terms of biological role, nucleoside triphosphate pyrophosphatase that hydrolyzes dTTP and UTP. Can also hydrolyze TTP and the modified nucleotides 5-methyl-UTP (m(5)UTP), pseudo-UTP and 5-methyl-CTP (m(5)CTP). Has weak activity with CTP. May have a dual role in cell division arrest and in preventing the incorporation of modified nucleotides into cellular nucleic acids. Important in maintenance of cell shape. The sequence is that of dTTP/UTP pyrophosphatase (yhdE) from Escherichia coli (strain K12).